A 378-amino-acid chain; its full sequence is Erythronate-4-phosphate dehydrogenase (378 aa).

The substrate site is built by serine 45 and threonine 66. Positions 146 and 175 each coordinate NAD(+). Residue arginine 208 is part of the active site. Aspartate 232 is an NAD(+) binding site. Glutamate 237 is a catalytic residue. The Proton donor role is filled by histidine 254. An NAD(+)-binding site is contributed by glycine 257. Tyrosine 258 contacts substrate.

The protein belongs to the D-isomer specific 2-hydroxyacid dehydrogenase family. PdxB subfamily. In terms of assembly, homodimer.

The protein localises to the cytoplasm. It catalyses the reaction 4-phospho-D-erythronate + NAD(+) = (R)-3-hydroxy-2-oxo-4-phosphooxybutanoate + NADH + H(+). It participates in cofactor biosynthesis; pyridoxine 5'-phosphate biosynthesis; pyridoxine 5'-phosphate from D-erythrose 4-phosphate: step 2/5. Its function is as follows. Catalyzes the oxidation of erythronate-4-phosphate to 3-hydroxy-2-oxo-4-phosphonooxybutanoate. This Salmonella dublin (strain CT_02021853) protein is Erythronate-4-phosphate dehydrogenase.